The following is a 218-amino-acid chain: Pyridoxal 5'-phosphate synthase subunit PdxT (218 aa).

54-56 is an L-glutamine binding site; the sequence is GES. The Nucleophile role is filled by C86. L-glutamine is bound by residues R120 and 149 to 150; that span reads IR. Residues H197 and E199 each act as charge relay system in the active site.

This sequence belongs to the glutaminase PdxT/SNO family. In the presence of PdxS, forms a dodecamer of heterodimers. Only shows activity in the heterodimer.

It carries out the reaction aldehydo-D-ribose 5-phosphate + D-glyceraldehyde 3-phosphate + L-glutamine = pyridoxal 5'-phosphate + L-glutamate + phosphate + 3 H2O + H(+). It catalyses the reaction L-glutamine + H2O = L-glutamate + NH4(+). It functions in the pathway cofactor biosynthesis; pyridoxal 5'-phosphate biosynthesis. In terms of biological role, catalyzes the hydrolysis of glutamine to glutamate and ammonia as part of the biosynthesis of pyridoxal 5'-phosphate. The resulting ammonia molecule is channeled to the active site of PdxS. The polypeptide is Pyridoxal 5'-phosphate synthase subunit PdxT (Saccharopolyspora erythraea (strain ATCC 11635 / DSM 40517 / JCM 4748 / NBRC 13426 / NCIMB 8594 / NRRL 2338)).